The following is a 269-amino-acid chain: Aquaporin-1 (269 aa).

The Cytoplasmic segment spans residues 1–11 (MASEIKKKLFW). A helical membrane pass occupies residues 12–29 (RAVVAEFLAMTLFVFISI). At 30–46 (GSALGFNYPLERNQTLV) the chain is on the extracellular side. A helical membrane pass occupies residues 47 to 65 (QDNVKVSLAFGLSIATLAQ). Residues 66-68 (SVG) are Cytoplasmic-facing. Residues 69 to 82 (HISGAHLNPAVTLG) lie within the membrane without spanning it. Positions 76–78 (NPA) match the NPA 1 motif. Topologically, residues 83–90 (LLLSCQIS) are cytoplasmic. Residues 91 to 109 (ILRAVMYIIAQCVGAIVAT) form a helical membrane-spanning segment. Topologically, residues 110-133 (AILSGITSSLVDNSLGRNDLAHGV) are extracellular. Residues 134 to 153 (NSGQGLGIEIIGTLQLVLCV) form a helical membrane-spanning segment. The Cytoplasmic portion of the chain corresponds to 154–163 (LATTDRRRRD). The helical transmembrane segment at 164-181 (LGGSAPLAIGLSVALGHL) threads the bilayer. At 182–186 (LAIDY) the chain is on the extracellular side. Residues 187–199 (TGCGINPARSFGS) lie within the membrane without spanning it. Positions 192–194 (NPA) match the NPA 2 motif. The Extracellular segment spans residues 200 to 206 (AVLTRNF). Residue N205 is glycosylated (N-linked (GlcNAc...) asparagine). Residues 207 to 224 (SNHWIFWVGPFIGGALAV) traverse the membrane as a helical segment. The Cytoplasmic portion of the chain corresponds to 225–269 (LIYDFILAPRSSDFTDRMKVWTSGQVEEYDLDADDINSRVEMKPK). S247 is modified (phosphoserine). Y253 is modified (phosphotyrosine). S262 is subject to Phosphoserine.

It belongs to the MIP/aquaporin (TC 1.A.8) family. As to quaternary structure, homotetramer; each monomer provides an independent water pore. Component of the ankyrin-1 complex in the erythrocyte, composed of ANK1, RHCE, RHAG, SLC4A1, EPB42, GYPA, GYPB and AQP1. Interacts with EPHB2; involved in endolymph production in the inner ear. Identified in a complex with STOM. Interacts (via the N-terminal) with ANK1 (via ANK 1-5 repeats). Interacts (via the C-terminal) with EPB42. As to expression, detected in erythrocytes (at protein level). In the kidney, expressed on luminal and basal borders of proximal tubules and in the thin limb of Henle's loop (at protein level).

It localises to the cell membrane. It catalyses the reaction H2O(in) = H2O(out). The catalysed reaction is nitric oxide(out) = nitric oxide(in). The enzyme catalyses CO2(out) = CO2(in). It carries out the reaction glycerol(in) = glycerol(out). It catalyses the reaction H2O2(out) = H2O2(in). The catalysed reaction is K(+)(in) = K(+)(out). The enzyme catalyses Na(+)(in) = Na(+)(out). Its function is as follows. Forms a water channel that facilitates the transport of water across cell membranes, playing a crucial role in water homeostasis in various tissues. Could also be permeable to small solutes including hydrogen peroxide, glycerol and gases such as amonnia (NH3), nitric oxide (NO) and carbon dioxide (CO2). Recruited to the ankyrin-1 complex, a multiprotein complex of the erythrocyte membrane, it could be part of a CO2 metabolon, linking facilitated diffusion of CO2 across the membrane, anion exchange of Cl(-)/HCO3(-) and interconversion of dissolved CO2 and carbonic acid in the cytosol. In vitro, it shows non-selective gated cation channel activity and may be permeable to cations like K(+) and Na(+) in vivo. In Mus musculus (Mouse), this protein is Aquaporin-1.